The chain runs to 882 residues: DNA mismatch repair protein MutS (882 aa).

The tract at residues 1–22 is disordered; that stretch reads MTLPSDFPLEPPATNKDPHRDY. 662-669 is a binding site for ATP; sequence GPNASGKS.

The protein belongs to the DNA mismatch repair MutS family.

In terms of biological role, this protein is involved in the repair of mismatches in DNA. It is possible that it carries out the mismatch recognition step. This protein has a weak ATPase activity. The chain is DNA mismatch repair protein MutS from Microcystis aeruginosa (strain NIES-843 / IAM M-2473).